The chain runs to 123 residues: uncharacterized protein (123 aa).

Residues 89–123 (GVGGRKLGSEGQSLSENSEQRSLMRWGCGGSSERR) form a disordered region. Positions 98-109 (EGQSLSENSEQR) are enriched in polar residues.

This is an uncharacterized protein from Encephalitozoon cuniculi (strain GB-M1) (Microsporidian parasite).